A 315-amino-acid chain; its full sequence is Ribose-phosphate pyrophosphokinase (315 aa).

Residues 37-39 (DGE) and 96-97 (RQ) each bind ATP. H131 and D170 together coordinate Mg(2+). Residue K194 is part of the active site. D-ribose 5-phosphate contacts are provided by residues R196, D220, and 224-228 (DTGGT).

The protein belongs to the ribose-phosphate pyrophosphokinase family. Class I subfamily. As to quaternary structure, homohexamer. It depends on Mg(2+) as a cofactor.

The protein resides in the cytoplasm. The catalysed reaction is D-ribose 5-phosphate + ATP = 5-phospho-alpha-D-ribose 1-diphosphate + AMP + H(+). Its pathway is metabolic intermediate biosynthesis; 5-phospho-alpha-D-ribose 1-diphosphate biosynthesis; 5-phospho-alpha-D-ribose 1-diphosphate from D-ribose 5-phosphate (route I): step 1/1. In terms of biological role, involved in the biosynthesis of the central metabolite phospho-alpha-D-ribosyl-1-pyrophosphate (PRPP) via the transfer of pyrophosphoryl group from ATP to 1-hydroxyl of ribose-5-phosphate (Rib-5-P). The chain is Ribose-phosphate pyrophosphokinase from Buchnera aphidicola subsp. Acyrthosiphon pisum (strain APS) (Acyrthosiphon pisum symbiotic bacterium).